Reading from the N-terminus, the 245-residue chain is Ureidoacrylate amidohydrolase RutB (245 aa).

Asp38 (proton acceptor) is an active-site residue. Residue Lys147 is part of the active site. Catalysis depends on Cys180, which acts as the Nucleophile.

Belongs to the isochorismatase family. RutB subfamily.

The enzyme catalyses (Z)-3-ureidoacrylate + H2O + H(+) = (Z)-3-aminoacrylate + NH4(+) + CO2. It catalyses the reaction (Z)-3-ureidoacrylate + H2O = (Z)-3-aminoacrylate + carbamate + H(+). The catalysed reaction is (Z)-2-methylureidoacrylate + H2O + H(+) = (Z)-2-methylaminoacrylate + NH4(+) + CO2. Its function is as follows. Hydrolyzes ureidoacrylate to form aminoacrylate and carbamate. The carbamate hydrolyzes spontaneously, thereby releasing one of the nitrogen atoms of the pyrimidine ring as ammonia and one of its carbon atoms as CO2. The chain is Ureidoacrylate amidohydrolase RutB from Acinetobacter baylyi (strain ATCC 33305 / BD413 / ADP1).